The sequence spans 711 residues: Putative membrane protein IgaA homolog (711 aa).

Methionine 1 is a topological domain (periplasmic). A helical membrane pass occupies residues serine 2–isoleucine 22. Topologically, residues lysine 23–arginine 204 are cytoplasmic. The next 2 helical transmembrane spans lie at glutamate 205–valine 225 and phenylalanine 226–phenylalanine 246. The Cytoplasmic segment spans residues alanine 247–arginine 339. Residues serine 340–leucine 360 form a helical membrane-spanning segment. Residues aspartate 361–tyrosine 655 are Periplasmic-facing. The chain crosses the membrane as a helical span at residues leucine 656–alanine 676. The Cytoplasmic portion of the chain corresponds to tryptophan 677–glutamate 711.

Belongs to the IgaA family.

The protein resides in the cell inner membrane. The chain is Putative membrane protein IgaA homolog (yrfF) from Escherichia coli O157:H7.